Here is a 319-residue protein sequence, read N- to C-terminus: Sulfate adenylyltransferase subunit 2 (319 aa).

2 disordered regions span residues 1–22 and 296–319; these read MNPGRGGAYAAGRDGTRGTRRP and RGATRADDKLSEAAMEDRKREGYF.

It belongs to the PAPS reductase family. CysD subfamily.

It catalyses the reaction sulfate + ATP + H(+) = adenosine 5'-phosphosulfate + diphosphate. It functions in the pathway antibiotic biosynthesis; mitomycin C biosynthesis. Its function is as follows. With CysN forms the ATP sulfurylase (ATPS) that catalyzes the adenylation of sulfate producing adenosine 5'-phosphosulfate (APS) and diphosphate, the first enzymatic step in sulfur assimilation pathway. APS synthesis involves the formation of a high-energy phosphoric-sulfuric acid anhydride bond driven by GTP hydrolysis by CysN coupled to ATP hydrolysis by CysD. The sequence is that of Sulfate adenylyltransferase subunit 2 (mmcV) from Streptomyces lavendulae.